Consider the following 518-residue polypeptide: Beta-secretase 2 (518 aa).

An N-terminal signal peptide occupies residues 1–20; the sequence is MGALARALLLPLLAQWLLRA. The propeptide occupies 21-62; the sequence is APELAPAPFTLPLRVAAATNRVVAPTPGPGTPAERHADGLAL. Over 21 to 473 the chain is Extracellular; that stretch reads APELAPAPFT…SEPILWIVSY (453 aa). Residues 92–429 form the Peptidase A1 domain; it reads YYLEMLIGTP…DRAQKRVGFA (338 aa). Residue D110 is part of the active site. N170 carries an N-linked (GlcNAc...) asparagine glycan. Cystine bridges form between C233–C433, C292–C457, and C344–C393. D303 is an active-site residue. Residue N366 is glycosylated (N-linked (GlcNAc...) asparagine). A helical transmembrane segment spans residues 474 to 494; it reads ALMSVCGAILLVLIVLLLLPF. Topologically, residues 495-518 are cytoplasmic; sequence RCQRRPRDPEVVNDESSLVRHRWK.

It belongs to the peptidase A1 family. In terms of assembly, monomer. Interacts with RTN3 and RTN4. In terms of processing, undergoes autoproteolytic cleavage. Glycosylated. As to expression, brain. Present in neurons within the hippocampus, frontal cortex and temporal cortex (at protein level). Expressed at low levels in most peripheral tissues and at higher levels in colon, kidney, pancreas, placenta, prostate, stomach and trachea. Expressed at low levels in the brain. Found in spinal cord, medulla oblongata, substantia nigra and locus coruleus. Expressed in the ductal epithelium of both normal and malignant prostate.

It localises to the cell membrane. The protein resides in the golgi apparatus. The protein localises to the endoplasmic reticulum. It is found in the endosome. Its subcellular location is the melanosome. It carries out the reaction Broad endopeptidase specificity. Cleaves Glu-Val-Asn-Leu-|-Asp-Ala-Glu-Phe in the Swedish variant of Alzheimer's amyloid precursor protein.. Responsible for the proteolytic processing of the amyloid precursor protein (APP). Cleaves APP, between residues 690 and 691, leading to the generation and extracellular release of beta-cleaved soluble APP, and a corresponding cell-associated C-terminal fragment which is later released by gamma-secretase. It has also been shown that it can cleave APP between residues 671 and 672. Involved in the proteolytic shedding of PMEL at early stages of melanosome biogenesis. Cleaves PMEL within the M-beta fragment to release the amyloidogenic PMEL luminal fragment containing M-alpha and a small portion of M-beta N-terminus. This is a prerequisite step for subsequent processing and assembly of PMEL fibrils into amyloid sheets. Responsible also for the proteolytic processing of CLTRN in pancreatic beta cells. This chain is Beta-secretase 2 (BACE2), found in Homo sapiens (Human).